The following is a 571-amino-acid chain: Sulfite reductase [NADPH] hemoprotein beta-component (571 aa).

[4Fe-4S] cluster-binding residues include Cys-435, Cys-441, Cys-480, and Cys-484. Residue Cys-484 coordinates siroheme.

It belongs to the nitrite and sulfite reductase 4Fe-4S domain family. As to quaternary structure, alpha(8)-beta(8). The alpha component is a flavoprotein, the beta component is a hemoprotein. It depends on siroheme as a cofactor. Requires [4Fe-4S] cluster as cofactor.

The catalysed reaction is hydrogen sulfide + 3 NADP(+) + 3 H2O = sulfite + 3 NADPH + 4 H(+). Its pathway is sulfur metabolism; hydrogen sulfide biosynthesis; hydrogen sulfide from sulfite (NADPH route): step 1/1. Functionally, component of the sulfite reductase complex that catalyzes the 6-electron reduction of sulfite to sulfide. This is one of several activities required for the biosynthesis of L-cysteine from sulfate. This is Sulfite reductase [NADPH] hemoprotein beta-component from Musicola paradisiaca (strain Ech703) (Dickeya paradisiaca).